We begin with the raw amino-acid sequence, 777 residues long: Endonuclease MutS2 (777 aa).

Position 328 to 335 (328 to 335 (GPNTGGKT)) interacts with ATP. One can recognise a Smr domain in the interval 702–777 (LDLRGKRYEE…GSGATIVIFK (76 aa)).

This sequence belongs to the DNA mismatch repair MutS family. MutS2 subfamily. As to quaternary structure, homodimer. Binds to stalled ribosomes, contacting rRNA.

Functionally, endonuclease that is involved in the suppression of homologous recombination and thus may have a key role in the control of bacterial genetic diversity. In terms of biological role, acts as a ribosome collision sensor, splitting the ribosome into its 2 subunits. Detects stalled/collided 70S ribosomes which it binds and splits by an ATP-hydrolysis driven conformational change. Acts upstream of the ribosome quality control system (RQC), a ribosome-associated complex that mediates the extraction of incompletely synthesized nascent chains from stalled ribosomes and their subsequent degradation. Probably generates substrates for RQC. This is Endonuclease MutS2 from Streptococcus sanguinis (strain SK36).